Consider the following 304-residue polypeptide: Aspartate carbamoyltransferase catalytic subunit (304 aa).

Residues Arg55 and Thr56 each coordinate carbamoyl phosphate. Lys84 contributes to the L-aspartate binding site. 3 residues coordinate carbamoyl phosphate: Arg105, His133, and Gln136. 2 residues coordinate L-aspartate: Arg165 and Arg226. 2 residues coordinate carbamoyl phosphate: Leu265 and Pro266.

This sequence belongs to the aspartate/ornithine carbamoyltransferase superfamily. ATCase family. Heterooligomer of catalytic and regulatory chains.

The catalysed reaction is carbamoyl phosphate + L-aspartate = N-carbamoyl-L-aspartate + phosphate + H(+). It participates in pyrimidine metabolism; UMP biosynthesis via de novo pathway; (S)-dihydroorotate from bicarbonate: step 2/3. Its function is as follows. Catalyzes the condensation of carbamoyl phosphate and aspartate to form carbamoyl aspartate and inorganic phosphate, the committed step in the de novo pyrimidine nucleotide biosynthesis pathway. The protein is Aspartate carbamoyltransferase catalytic subunit of Methanothrix thermoacetophila (strain DSM 6194 / JCM 14653 / NBRC 101360 / PT) (Methanosaeta thermophila).